We begin with the raw amino-acid sequence, 518 residues long: Arp2/3 complex-activating protein rickA (518 aa).

The tract at residues 310–518 is disordered; that stretch reads SAAQLQSAET…ERNAKQSQQR (209 aa). Composition is skewed to pro residues over residues 344–354 and 382–401; these read TPPPAPPPPMP and VPPP…PPPV. The span at 418–430 shows a compositional bias: polar residues; the sequence is QPRPAVDTTNLMK. One can recognise a WH2 domain in the interval 424 to 441; sequence DTTNLMKQIQGGFNLKKI. The segment covering 439–461 has biased composition (basic and acidic residues); that stretch reads KKIEYGEDGKPIPKNKEDTKETS. Residues 488-498 show a composition bias toward polar residues; that stretch reads GTDSGWASDVS.

In terms of assembly, homodimer.

It localises to the cell surface. Its function is as follows. Recruits and activates the Arp2/3 complex, which in turn leads to actin polymerization, promoting Rickettsia motility during infection. This is Arp2/3 complex-activating protein rickA (rickA) from Rickettsia bellii (strain RML369-C).